Here is a 361-residue protein sequence, read N- to C-terminus: MKNRIHNFNAGPAALPLPVLEEIQAELLDFKGSGMSIMEVSHRSKWFDDVINETVERINRLMGLGDDFQVLFMQGGASTQFALVPMNLLPEGQSADYVNTGTWSTKAIKEAQAMGKTVNVAASSEDRNFCYIPKDIPLDPNAAYVHITSNNTIKGTAYTDFPDAGNVPLIADMSSDILSRPIDASKFGLIYAGAQKNMGPAGVCVAIIRKDMLERVPASLPSMFKYTTFADKNSMYNTPPCFAIYTVGLVVKWIEETIGGLEKMEARNRKKADTLYSIFDSSDFYSGTADKDSRSLMNVTFRLPSEDLEKAFVAQALENGLGGLKGHRSVGGCRASIYNPTSQEGIEALVDFMKEFEKKNG.

An L-glutamate-binding site is contributed by R43. Pyridoxal 5'-phosphate is bound by residues 77-78 (AS), W103, T152, D172, and Q195. K196 carries the N6-(pyridoxal phosphate)lysine modification. Pyridoxal 5'-phosphate is bound at residue 237–238 (NT).

The protein belongs to the class-V pyridoxal-phosphate-dependent aminotransferase family. SerC subfamily. As to quaternary structure, homodimer. It depends on pyridoxal 5'-phosphate as a cofactor.

Its subcellular location is the cytoplasm. It catalyses the reaction O-phospho-L-serine + 2-oxoglutarate = 3-phosphooxypyruvate + L-glutamate. The catalysed reaction is 4-(phosphooxy)-L-threonine + 2-oxoglutarate = (R)-3-hydroxy-2-oxo-4-phosphooxybutanoate + L-glutamate. Its pathway is amino-acid biosynthesis; L-serine biosynthesis; L-serine from 3-phospho-D-glycerate: step 2/3. The protein operates within cofactor biosynthesis; pyridoxine 5'-phosphate biosynthesis; pyridoxine 5'-phosphate from D-erythrose 4-phosphate: step 3/5. Functionally, catalyzes the reversible conversion of 3-phosphohydroxypyruvate to phosphoserine and of 3-hydroxy-2-oxo-4-phosphonooxybutanoate to phosphohydroxythreonine. In Desulfatibacillum aliphaticivorans, this protein is Phosphoserine aminotransferase.